The primary structure comprises 427 residues: Glutamate-1-semialdehyde 2,1-aminomutase (427 aa).

N6-(pyridoxal phosphate)lysine is present on Lys265.

Belongs to the class-III pyridoxal-phosphate-dependent aminotransferase family. HemL subfamily. As to quaternary structure, homodimer. Requires pyridoxal 5'-phosphate as cofactor.

The protein resides in the cytoplasm. The catalysed reaction is (S)-4-amino-5-oxopentanoate = 5-aminolevulinate. It participates in porphyrin-containing compound metabolism; protoporphyrin-IX biosynthesis; 5-aminolevulinate from L-glutamyl-tRNA(Glu): step 2/2. This chain is Glutamate-1-semialdehyde 2,1-aminomutase, found in Pasteurella multocida (strain Pm70).